The sequence spans 127 residues: Protein yippee-like 4 (127 aa).

A Yippee domain is found at 27–124; the sequence is RTYSCVHCRA…IEMSHMVKDN (98 aa). 4 residues coordinate Zn(2+): Cys31, Cys34, Cys87, and Cys90. A phosphothreonine mark is found at Thr92 and Thr93. Tyr98 is subject to Phosphotyrosine.

Belongs to the yippee family.

The protein resides in the nucleus. It localises to the nucleolus. In Chlorocebus aethiops (Green monkey), this protein is Protein yippee-like 4 (YPEL4).